A 411-amino-acid polypeptide reads, in one-letter code: MDWSHLWLYVSPPVLGGIIGYFTNDIAIKMLFRPYQAIYIAGRRVPFTPGLIPRNQERLALNISKTIMGSLLTPQELQNLARRLLQTERVQAAILWLLRLAIEQINTEKNEKSAKIVAGILRDLLGESLPRLLKVLARREDFLEAQINQIFDQILLEFQLSEEQATRLADWLLEVVLPPDMLRQAIVDFLTDRTIQIIDEGFREKTSGTYWVVANLFGLRNTLTRLRTFCLDEKEATNNRLQELTQDLQIRERIRKFLQNLSLQNLPMGTVRQLRKTTRESVRHYLQNSGSDFLQGLTDSVDWENIAVVLLNRLSTSSVVSTSLEVMSQELALILDKYLEKDLEIIVAQAIPILSIDQVIVDRVKSTSPADLEAAIEGIVKNELQAIVTLGGVLGFVIGLLQTVFLVLSQY.

2 helical membrane-spanning segments follow: residues 3-23 (WSHLWLYVSPPVLGGIIGYFT) and 387-407 (IVTLGGVLGFVIGLLQTVFLV).

The protein belongs to the UPF0754 family.

The protein resides in the cell inner membrane. In Nostoc punctiforme (strain ATCC 29133 / PCC 73102), this protein is UPF0754 membrane protein Npun_R4433.